Consider the following 104-residue polypeptide: Replication restart protein PriB (104 aa).

The region spanning 1–101 (MTNRLELSGI…LHAEQIELID (101 aa)) is the SSB domain.

This sequence belongs to the PriB family. In terms of assembly, homodimer. Interacts with DnaT. Interacts with PriA. Component of the replication restart primosome. Primosome assembly occurs via a 'hand-off' mechanism. PriA binds to replication forks, subsequently PriB then DnaT bind; DnaT then displaces ssDNA to generate the helicase loading substrate.

Its function is as follows. Involved in the restart of stalled replication forks, which reloads the replicative helicase on sites far from the origin of replication; the PriA-PriB pathway is the major replication restart pathway. During primosome assembly it facilitates complex formation between PriA and DnaT on DNA; stabilizes PriA on DNA. Stimulates the DNA unwinding activity of PriA helicase. In terms of biological role, binds single-stranded (ss)DNA at the primosome assembly site (PAS). One study finds it binds 15 nucleotide (nt) ssDNA. Another study finds the minimal ssDNA length for binding to PriB is 25 nt; prefers dT(30) over dA(30). Also binds 22 nt dsDNA. In Klebsiella pneumoniae subsp. pneumoniae (strain ATCC 700721 / MGH 78578), this protein is Replication restart protein PriB.